A 248-amino-acid polypeptide reads, in one-letter code: Killer cell lectin-like receptor subfamily I member 2 (248 aa).

Over 1-79 (MHKKKHIKHG…GIDPWLTTWQ (79 aa)) the chain is Cytoplasmic. The segment at 19–44 (IGTKSPTFQEKQRPSKTDQRSTVWRE) is disordered. A compositionally biased stretch (basic and acidic residues) spans 28–44 (EKQRPSKTDQRSTVWRE). Residues 80–100 (MITVILATLCIILVTKVGFLI) form a helical; Signal-anchor for type II membrane protein membrane-spanning segment. Residues 101-248 (PSLFSKGEKQ…KKTYICEFNI (148 aa)) lie on the Extracellular side of the membrane. 3 cysteine pairs are disulfide-bonded: Cys132–Cys145, Cys161–Cys244, and Cys223–Cys236. Positions 139-245 (FGNNFYCVFR…CSAKKTYICE (107 aa)) constitute a C-type lectin domain. 3 N-linked (GlcNAc...) asparagine glycosylation sites follow: Asn197, Asn214, and Asn220.

Heterodimer with KLRE1. In terms of tissue distribution, expressed in natural killer (NK) cells.

The protein resides in the cell membrane. Functionally, lectin-like receptor for natural killer (NK) cells. Heterodimer formation with KLRE1 mediates NK cell cytolytic activity. This is Killer cell lectin-like receptor subfamily I member 2 from Mus musculus (Mouse).